The following is a 296-amino-acid chain: Probable DNA-directed RNA polymerase III subunit RPC6 (296 aa).

The protein belongs to the eukaryotic RPC34/RPC39 RNA polymerase subunit family.

The protein localises to the nucleus. Functionally, DNA-dependent RNA polymerase catalyzes the transcription of DNA into RNA using the four ribonucleoside triphosphates as substrates. Specific peripheric component of RNA polymerase III which synthesizes small RNAs, such as 5S rRNA and tRNAs. The chain is Probable DNA-directed RNA polymerase III subunit RPC6 from Caenorhabditis elegans.